The sequence spans 290 residues: MNEFVIDKKAMRQAFSRAAEGYDASAVLQREVCMRMLERLEYIKLQPARLLDAGSGTGWGGRQLAEKYPAAQVISLDIAIGMLQTSKSRSSWWQKLFGGCRQLPVCADVEALPLAANSLDMVWSNLAVQWCNDLPATFVELHRVLKTEGLLMFSTLGPDTLKELRQAFKGVDERSHLNRFADMHDIGDMLVQAGFAEPVMDMEYLTLTYEDVRGVLQDLKAIGAHNTTAGRGQGLMGKAAWARLLENYEKLRRDGKLPATYEVVYGHAWKPAPRVNRDGAAIIKTSFKIK.

This sequence belongs to the methyltransferase superfamily.

The enzyme catalyses malonyl-[ACP] + S-adenosyl-L-methionine = malonyl-[ACP] methyl ester + S-adenosyl-L-homocysteine. It participates in cofactor biosynthesis; biotin biosynthesis. Converts the free carboxyl group of a malonyl-thioester to its methyl ester by transfer of a methyl group from S-adenosyl-L-methionine (SAM). It allows to synthesize pimeloyl-ACP via the fatty acid synthetic pathway. The sequence is that of Malonyl-[acyl-carrier protein] O-methyltransferase from Gallionella capsiferriformans (strain ES-2) (Gallionella ferruginea capsiferriformans (strain ES-2)).